The primary structure comprises 3259 residues: Striated muscle-specific serine/threonine-protein kinase (3259 aa).

Residues 1-30 (MQKARGTRGEDAGTRAPPSPGVPPKRAKVG) are disordered. The residue at position 33 (Arg33) is an Omega-N-methylarginine. The region spanning 45 to 126 (PVFLRPLKNA…GKASCEAVLT (82 aa)) is the Ig-like 1 domain. Ser141 carries the post-translational modification Phosphoserine. 4 disordered regions span residues 155–185 (RAFS…TSEE), 198–226 (EQEA…GPRH), 278–716 (PSGL…DDSY), and 816–880 (VRPG…KVSL). Positions 158–185 (STPTGGSDTLVGTSLDTPPTSVTGTSEE) are enriched in polar residues. Residues 301–317 (PALPPPSKSALLPPPSP) are compositionally biased toward pro residues. Ser368 and Ser375 each carry phosphoserine. Thr379 bears the Phosphothreonine mark. Ser382 and Ser385 each carry phosphoserine. Residues 404-422 (ILDKLQFFEERRRSLERSD) show a composition bias toward basic and acidic residues. Phosphoserine is present on Ser423. Phosphothreonine is present on Thr453. 6 positions are modified to phosphoserine: Ser457, Ser463, Ser493, Ser511, Ser531, and Ser554. The span at 459–473 (EELRSPRGSVAERRR) shows a compositional bias: basic and acidic residues. Basic and acidic residues predominate over residues 510 to 522 (TSREELVRSHESL). Basic and acidic residues-rich tracts occupy residues 624–638 (PESR…KREP) and 663–680 (EKNR…RGPE). One can recognise an Ig-like 2 domain in the interval 727-817 (PVFEIPLQNM…ASCASSLAVR (91 aa)). Over residues 820 to 830 (ASTSPFSSPIT) the composition is skewed to polar residues. 3 Ig-like domains span residues 874-963 (PTFK…ARLE), 968-1056 (PESR…DELT), and 1069-1157 (PLFT…AQLY). An intrachain disulfide couples Cys994 to Cys1046. A phosphoserine mark is found at Ser1133 and Ser1177. The disordered stretch occupies residues 1162–1185 (RTAASGPSSKLEKMPSIPEEPEHG). The region spanning 1193 to 1283 (PDFLRPLQDL…AACYAHLYVT (91 aa)) is the Ig-like 6 domain. A Fibronectin type-III 1 domain is found at 1290–1387 (PDGAPQVVAV…PSEPVQLLEH (98 aa)). Over residues 1367–1379 (SSGKSSSKPSAPS) the composition is skewed to low complexity. Residues 1367–1386 (SSGKSSSKPSAPSEPVQLLE) are disordered. The 89-residue stretch at 1490–1578 (PRFESIMEDV…GEVSCKAELS (89 aa)) folds into the Ig-like 7 domain. The 254-residue stretch at 1606–1859 (YDIHQEIGRG…AEETLEHPWF (254 aa)) folds into the Protein kinase 1 domain. ATP is bound by residues 1612-1620 (IGRGAFSYL) and Lys1635. The active-site Proton acceptor is Asp1724. Disordered regions lie at residues 1913–2244 (MPRR…QMPA), 2336–2451 (AKFK…SPVL), and 2463–2562 (RLSS…SQPN). Over residues 1918 to 1927 (PPSGGLSSSS) the composition is skewed to low complexity. Phosphoserine occurs at positions 1993, 2004, 2019, 2020, and 2042. Over residues 2009 to 2019 (SPRRPELRRGS) the composition is skewed to basic and acidic residues. An Asymmetric dimethylarginine; alternate modification is found at Arg2060. Arg2060 is subject to Omega-N-methylarginine; alternate. Residues 2069 to 2081 (AQRLQALRQRLLR) are compositionally biased toward low complexity. Ser2114 and Ser2135 each carry phosphoserine. Arg2144 is subject to Omega-N-methylarginine. Polar residues predominate over residues 2168–2179 (ESPSLSALSETQ). Residues 2180–2189 (PPSPALPSAP) are compositionally biased toward pro residues. 2 positions are modified to phosphoserine: Ser2182 and Ser2207. Residues 2193–2207 (ITKSPEPSAATSRDS) show a composition bias toward polar residues. The segment covering 2208 to 2218 (PQPPAPQPVPE) has biased composition (pro residues). The segment covering 2219–2229 (KIPEPKPEPVR) has biased composition (basic and acidic residues). Residues 2230-2244 (AAKPAQPPLALQMPA) show a composition bias toward low complexity. The span at 2336–2345 (AKFKRSRESP) shows a compositional bias: basic and acidic residues. Residues 2346 to 2355 (LSRGLRLLSR) show a composition bias toward low complexity. The span at 2356–2372 (SRSEERGPFRGAEDDGI) shows a compositional bias: basic and acidic residues. At Ser2376 the chain carries Phosphoserine. Position 2380 is a phosphothreonine (Thr2380). The segment covering 2384–2395 (LVRRPERSRSVQ) has biased composition (basic and acidic residues). Ser2410, Ser2414, Ser2438, Ser2439, Ser2444, and Ser2448 each carry phosphoserine. A compositionally biased stretch (low complexity) spans 2463–2484 (RLSSRLQRSGSSEDSGGASGRS). The span at 2510–2520 (QLASQTGATTP) shows a compositional bias: polar residues. Phosphoserine occurs at positions 2521 and 2524. A compositionally biased stretch (low complexity) spans 2521–2540 (SAESLGSEASGTSGSSAPGE). A compositionally biased stretch (basic residues) spans 2543-2554 (SRHRWGLSRLRK). The residue at position 2559 (Ser2559) is a Phosphoserine. The Ig-like 8 domain maps to 2583–2673 (PPVFHIKLKD…GSITSSCTVA (91 aa)). Cys2605 and Cys2657 form a disulfide bridge. The region spanning 2680-2774 (KLAPPEVPQT…KVFIRGTQDS (95 aa)) is the Fibronectin type-III 2 domain. Phosphothreonine is present on Thr2771. 2 disordered regions span residues 2771–2829 (TQDS…MSAN) and 2855–2957 (TQQA…PQKP). The residue at position 2774 (Ser2774) is a Phosphoserine. Positions 2793 to 2810 (RAPPPDSPTSLVPTPPLA) are enriched in pro residues. Over residues 2814–2828 (SQASTLSPSTSSMSA) the composition is skewed to low complexity. The 107-residue stretch at 2859–2965 (EPSPPSILVT…KPYTFLEEKA (107 aa)) folds into the Fibronectin type-III 3 domain. Residues 2880 to 2907 (GTLTPTSSPQGVKPAPSSSSLYMVTSFV) are compositionally biased toward polar residues. Residues 2910–2924 (PPDPQPPAPEPPPEP) show a composition bias toward pro residues. The span at 2940 to 2950 (SSPTPESTTLR) shows a compositional bias: polar residues. Ser2941 is modified (phosphoserine). The Protein kinase 2 domain occupies 2958-3210 (YTFLEEKARG…LQDCLAHPWL (253 aa)). ATP is bound by residues 2964-2972 (KARGRFGVV) and Lys2987. The active-site Proton acceptor is Asp3077.

The protein belongs to the protein kinase superfamily. CAMK Ser/Thr protein kinase family. In terms of assembly, interacts with MTM1. In terms of processing, may be autophosphorylated. In terms of tissue distribution, isoform 2 is highly expressed in differentiated arterial smooth muscle cells (ASMC) in the medial layer of the aorta. Weakly detected in brain and testis and to a lesser extent in organs rich in striated muscle or visceral smooth muscle.

Its subcellular location is the nucleus. It catalyses the reaction L-seryl-[protein] + ATP = O-phospho-L-seryl-[protein] + ADP + H(+). It carries out the reaction L-threonyl-[protein] + ATP = O-phospho-L-threonyl-[protein] + ADP + H(+). Isoform 2 may have a role in regulating the growth and differentiation of arterial smooth muscle cells. This chain is Striated muscle-specific serine/threonine-protein kinase (Speg), found in Rattus norvegicus (Rat).